A 685-amino-acid polypeptide reads, in one-letter code: Galactocerebrosidase (685 aa).

Residues 1–42 (MAEWLLSASRQRRVKAMTAAAGSAGRAAVPFLLCALLAPGGA) form the signal peptide. Thr-109 serves as a coordination point for substrate. An N-linked (GlcNAc...) asparagine glycan is attached at Asn-143. Substrate contacts are provided by Trp-151 and Asn-197. Glu-198 (proton donor/acceptor) is an active-site residue. The Nucleophile role is filled by Glu-274. A disulfide bridge connects residues Cys-287 and Cys-394. An N-linked (GlcNAc...) asparagine glycan is attached at Asn-379. Arg-396 lines the substrate pocket. Asn-403, Asn-451, Asn-556, Asn-559, and Asn-602 each carry an N-linked (GlcNAc...) asparagine glycan.

Belongs to the glycosyl hydrolase 59 family.

Its subcellular location is the lysosome. The catalysed reaction is a beta-D-galactosyl-(1&lt;-&gt;1')-N-acylsphing-4-enine + H2O = an N-acylsphing-4-enine + D-galactose. It carries out the reaction beta-D-galactosyl-(1&lt;-&gt;1)-sphing-4-enine + H2O = sphing-4-enine + D-galactose. It catalyses the reaction a D-galactosylceramide + H2O = an N-acyl-sphingoid base + D-galactose. Its function is as follows. Hydrolyzes the galactose ester bonds of glycolipids such as galactosylceramide and galactosylsphingosine. Enzyme with very low activity responsible for the lysosomal catabolism of galactosylceramide, a major lipid in myelin, kidney and epithelial cells of small intestine and colon. The chain is Galactocerebrosidase from Macaca mulatta (Rhesus macaque).